Reading from the N-terminus, the 143-residue chain is MSILSEFKEFAVKGNVIDLAVGVIIGAAFGKIVDSIVADIIMPVVGLVFGKLDFSNLYVVLGTVPAGVANNLADLKKAGVPVLAYGNFITIAVNFVILAFIIFMMVKQINKLRKTHAEAPAAPVAPPEDIALLREIRDSLKRP.

Helical transmembrane passes span Val-21–Ile-41, Val-44–Val-64, and Gly-86–Val-106.

The protein belongs to the MscL family. In terms of assembly, homopentamer.

It is found in the cell inner membrane. Its function is as follows. Channel that opens in response to stretch forces in the membrane lipid bilayer. May participate in the regulation of osmotic pressure changes within the cell. This chain is Large-conductance mechanosensitive channel, found in Variovorax paradoxus (strain S110).